A 427-amino-acid chain; its full sequence is 3-phosphoshikimate 1-carboxyvinyltransferase (427 aa).

The 3-phosphoshikimate site is built by lysine 21, serine 22, and arginine 26. Lysine 21 contacts phosphoenolpyruvate. The phosphoenolpyruvate site is built by glycine 93 and arginine 121. 3-phosphoshikimate is bound by residues serine 166, glutamine 168, aspartate 314, and lysine 341. Position 168 (glutamine 168) interacts with phosphoenolpyruvate. Aspartate 314 functions as the Proton acceptor in the catalytic mechanism. Positions 345 and 387 each coordinate phosphoenolpyruvate.

The protein belongs to the EPSP synthase family. Monomer.

The protein localises to the cytoplasm. It catalyses the reaction 3-phosphoshikimate + phosphoenolpyruvate = 5-O-(1-carboxyvinyl)-3-phosphoshikimate + phosphate. It functions in the pathway metabolic intermediate biosynthesis; chorismate biosynthesis; chorismate from D-erythrose 4-phosphate and phosphoenolpyruvate: step 6/7. Catalyzes the transfer of the enolpyruvyl moiety of phosphoenolpyruvate (PEP) to the 5-hydroxyl of shikimate-3-phosphate (S3P) to produce enolpyruvyl shikimate-3-phosphate and inorganic phosphate. This is 3-phosphoshikimate 1-carboxyvinyltransferase from Alkaliphilus oremlandii (strain OhILAs) (Clostridium oremlandii (strain OhILAs)).